Consider the following 305-residue polypeptide: UDP-3-O-acyl-N-acetylglucosamine deacetylase (305 aa).

Positions 79, 238, and 242 each coordinate Zn(2+). His265 acts as the Proton donor in catalysis.

Belongs to the LpxC family. It depends on Zn(2+) as a cofactor.

The enzyme catalyses a UDP-3-O-[(3R)-3-hydroxyacyl]-N-acetyl-alpha-D-glucosamine + H2O = a UDP-3-O-[(3R)-3-hydroxyacyl]-alpha-D-glucosamine + acetate. Its pathway is glycolipid biosynthesis; lipid IV(A) biosynthesis; lipid IV(A) from (3R)-3-hydroxytetradecanoyl-[acyl-carrier-protein] and UDP-N-acetyl-alpha-D-glucosamine: step 2/6. Catalyzes the hydrolysis of UDP-3-O-myristoyl-N-acetylglucosamine to form UDP-3-O-myristoylglucosamine and acetate, the committed step in lipid A biosynthesis. The protein is UDP-3-O-acyl-N-acetylglucosamine deacetylase of Salmonella arizonae (strain ATCC BAA-731 / CDC346-86 / RSK2980).